Reading from the N-terminus, the 962-residue chain is Protocadherin gamma-A4 (962 aa).

The disordered stretch occupies residues 1–24 (MHFILDPEDPGAPQASTEGKPKHR). Positions 1-59 (MHFILDPEDPGAPQASTEGKPKHRRLRGGVVMAAPPARPDHTRLLQICLLLGVLVEIRA) are cleaved as a signal peptide. Cadherin domains follow at residues 60–164 (EQIL…PPSF), 165–273 (GTEQ…APVF), 274–378 (TQPE…APEV), 379–483 (TVTS…PPTF), 484–598 (PHAS…YPTF), and 601–713 (DGST…KPSA). At 60–723 (EQILYSVFEE…DPDDSGLTLY (664 aa)) the chain is on the extracellular side. Residues Asn450 and Asn576 are each glycosylated (N-linked (GlcNAc...) asparagine). A helical membrane pass occupies residues 724–744 (LVVAVAAVSCVFLAFVTVLLA). Over 745-962 (LKLRRWHKSR…KKKSGKKEKK (218 aa)) the chain is Cytoplasmic. 2 disordered regions span residues 832 to 871 (KGDP…WPNN) and 932 to 962 (ATLT…KEKK). Polar residues predominate over residues 836–871 (NLQQAPPNTDWRFSQAQRPGTSGSQNGDDTGTWPNN). Residues 952–962 (NKKKSGKKEKK) are compositionally biased toward basic residues.

It localises to the cell membrane. Its function is as follows. Potential calcium-dependent cell-adhesion protein. May be involved in the establishment and maintenance of specific neuronal connections in the brain. In Homo sapiens (Human), this protein is Protocadherin gamma-A4 (PCDHGA4).